Here is a 96-residue protein sequence, read N- to C-terminus: Bublin coiled-coil protein (96 aa).

The stretch at 39–79 (NSCLDDIEDRNDALNGKLHELLESNRQARKDFRQQLNDEEA) forms a coiled coil. Positions 63-96 (NRQARKDFRQQLNDEEASPPPAEDPASRDTQTED) are disordered. Residues 87–96 (PASRDTQTED) show a composition bias toward basic and acidic residues.

The protein belongs to the UPF0184 (EST00098) family.

The protein localises to the cell junction. The protein resides in the cytoplasm. Its subcellular location is the cytoskeleton. Essential for intermediate filament organization in intestinal cells, interacts with intermediate filament and regulates intestinal lumen morphology. This Ctenopharyngodon idella (Grass carp) protein is Bublin coiled-coil protein (bbln).